A 192-amino-acid polypeptide reads, in one-letter code: Peptidyl-tRNA hydrolase (192 aa).

Tyrosine 14 provides a ligand contact to tRNA. Histidine 19 functions as the Proton acceptor in the catalytic mechanism. Residues tyrosine 64, asparagine 66, and asparagine 112 each coordinate tRNA.

This sequence belongs to the PTH family. As to quaternary structure, monomer.

It is found in the cytoplasm. It carries out the reaction an N-acyl-L-alpha-aminoacyl-tRNA + H2O = an N-acyl-L-amino acid + a tRNA + H(+). In terms of biological role, hydrolyzes ribosome-free peptidyl-tRNAs (with 1 or more amino acids incorporated), which drop off the ribosome during protein synthesis, or as a result of ribosome stalling. Catalyzes the release of premature peptidyl moieties from peptidyl-tRNA molecules trapped in stalled 50S ribosomal subunits, and thus maintains levels of free tRNAs and 50S ribosomes. The polypeptide is Peptidyl-tRNA hydrolase (Anaeromyxobacter dehalogenans (strain 2CP-C)).